Reading from the N-terminus, the 80-residue chain is CLAVATA3/ESR (CLE)-related protein 14 (80 aa).

The signal sequence occupies residues 1 to 26; sequence MKVWSQRLSFLIVMIFILAGLHSSSA. Hydroxyproline occurs at positions 71 and 74. An O-linked (Ara...) hydroxyproline glycan is attached at P74.

Belongs to the CLV3/ESR signal peptide family. In terms of assembly, interacts with the extracellular leucine-rich repeat region of CLV2 and PEPR2. The O-glycosylation (arabinosylation) of the hydroxyproline Pro-74 enhances binding affinity of the CLE14p peptide for its receptor. As to expression, mostly expressed in roots, and, to a lower extent, in seedlings and leaves. Expressed in the primary root tip under Pi deficiency.

It localises to the secreted. The protein localises to the extracellular space. In terms of biological role, extracellular signal peptide that regulates cell fate. Represses root apical meristem maintenance. Acts as an elicitor of the root meristem differentiation through the CLV2/CRN complex signaling pathway. Inhibits irreversibly root growth by reducing cell division rates in the root apical meristem. Regulates the transition of protophloem cells from proliferation to differentiation, thus impinging on postembryonic growth capacity of the root meristem; this signaling pathway requires CRN and CLV2. This Arabidopsis thaliana (Mouse-ear cress) protein is CLAVATA3/ESR (CLE)-related protein 14.